The sequence spans 179 residues: Replication restart protein DnaT (179 aa).

The tract at residues 156-179 (GGLPKRDVNTVSEPDSQIPPGFRG) is disordered.

Belongs to the DnaT family. In terms of assembly, homooligomerizes. Interacts with PriB. Component of the replication restart primosome. Primosome assembly occurs via a 'hand-off' mechanism. PriA binds to replication forks, subsequently PriB then DnaT bind; DnaT then displaces ssDNA to generate the helicase loading substrate.

Functionally, involved in the restart of stalled replication forks, which reloads the replicative helicase on sites other than the origin of replication. Can function in multiple replication restart pathways. Displaces ssDNA from a PriB-ssDNA complex. Probably forms a spiral filament on ssDNA. The polypeptide is Replication restart protein DnaT (Shigella dysenteriae serotype 1 (strain Sd197)).